Consider the following 356-residue polypeptide: MTKIAVLPGDGIGTEIVAEAVKVLKTLGETFEMETAPVGGAGYEAKGHPLPEDTLKLAKEADAILFGAVGDWKYDTLPRELRPEQAILGLRKHLQLFANFRPAICYPELAGASSMKPEIVAGLDILIVRELTGDIYFGQPRGVRAAPDGLFAGAREGFDTMRYSEPEIRRIAHVAFQAAAKRGKKLCSVDKANVLETFQFWKDIVTDVHKEYPEVELSHMYVDNAAMQLVKAPKNFDVVVTGNMFGDILSDEAAMLTGSIGMLPSASLDANNKGLYEPSHGSAPDIAGKGIANPLATILSAAMMLRYTLGKAEQADRIENAVKKVLAQGYRTGDILTPGCKQVGTVEMGDAVVAAL.

Substrate is bound by residues arginine 91, arginine 101, arginine 129, and aspartate 223. Mg(2+) contacts are provided by aspartate 223, aspartate 247, and aspartate 251. 281-293 (GSAPDIAGKGIAN) is a binding site for NAD(+).

Belongs to the isocitrate and isopropylmalate dehydrogenases family. LeuB type 1 subfamily. As to quaternary structure, homodimer. Mg(2+) is required as a cofactor. It depends on Mn(2+) as a cofactor.

The protein resides in the cytoplasm. The catalysed reaction is (2R,3S)-3-isopropylmalate + NAD(+) = 4-methyl-2-oxopentanoate + CO2 + NADH. The protein operates within amino-acid biosynthesis; L-leucine biosynthesis; L-leucine from 3-methyl-2-oxobutanoate: step 3/4. Its function is as follows. Catalyzes the oxidation of 3-carboxy-2-hydroxy-4-methylpentanoate (3-isopropylmalate) to 3-carboxy-4-methyl-2-oxopentanoate. The product decarboxylates to 4-methyl-2 oxopentanoate. In Ralstonia nicotianae (strain ATCC BAA-1114 / GMI1000) (Ralstonia solanacearum), this protein is 3-isopropylmalate dehydrogenase.